Consider the following 251-residue polypeptide: Triosephosphate isomerase (251 aa).

9-11 (NWK) is a binding site for substrate. Residue His-95 is the Electrophile of the active site. Glu-167 (proton acceptor) is an active-site residue. Substrate-binding positions include Gly-173, Ser-213, and 234–235 (GG).

It belongs to the triosephosphate isomerase family. In terms of assembly, homodimer.

It localises to the cytoplasm. The catalysed reaction is D-glyceraldehyde 3-phosphate = dihydroxyacetone phosphate. Its pathway is carbohydrate biosynthesis; gluconeogenesis. It participates in carbohydrate degradation; glycolysis; D-glyceraldehyde 3-phosphate from glycerone phosphate: step 1/1. In terms of biological role, involved in the gluconeogenesis. Catalyzes stereospecifically the conversion of dihydroxyacetone phosphate (DHAP) to D-glyceraldehyde-3-phosphate (G3P). In Lacticaseibacillus casei (strain BL23) (Lactobacillus casei), this protein is Triosephosphate isomerase.